Consider the following 303-residue polypeptide: Putative HTH-type transcriptional regulatory protein Mpal_0031 (303 aa).

The HTH cro/C1-type domain occupies 132–189 (LRGLREQRNMSLGDLGAVLGVSRRTISKYESGMGTTLEIAIKIEEVFDSGVIESIDLL). Positions 143–162 (LGDLGAVLGVSRRTISKYES) form a DNA-binding region, H-T-H motif.

The polypeptide is Putative HTH-type transcriptional regulatory protein Mpal_0031 (Methanosphaerula palustris (strain ATCC BAA-1556 / DSM 19958 / E1-9c)).